A 536-amino-acid chain; its full sequence is Dual specificity calcium/calmodulin-dependent 3',5'-cyclic nucleotide phosphodiesterase 1B (536 aa).

The tract at residues 1 to 20 (MELSPRSPPEMLEESDCPSP) is disordered. S7 and S15 each carry phosphoserine. 2 calmodulin-binding regions span residues 27–47 (PSKK…KQLE) and 118–141 (EKPK…MFRR). Positions 146–503 (VGPTYSTAVL…QKWKERAASG (358 aa)) constitute a PDEase domain. The active-site Proton donor is the H223. Residues H227, H263, D264, and D370 each coordinate Zn(2+). Residue D264 participates in Mg(2+) binding. Disordered stretches follow at residues 447 to 474 (LADE…VGDP) and 494 to 536 (QKWK…GNLD). Positions 455–464 (KNQPSFQWRQ) are enriched in polar residues. Phosphoserine occurs at positions 466 and 514.

The protein belongs to the cyclic nucleotide phosphodiesterase family. PDE1 subfamily. In terms of assembly, homodimer. It depends on Zn(2+) as a cofactor. Mg(2+) is required as a cofactor.

The protein resides in the cytoplasm. It localises to the cytosol. It catalyses the reaction a nucleoside 3',5'-cyclic phosphate + H2O = a nucleoside 5'-phosphate + H(+). The catalysed reaction is 3',5'-cyclic GMP + H2O = GMP + H(+). It carries out the reaction 3',5'-cyclic AMP + H2O = AMP + H(+). With respect to regulation, type I PDE are activated by the binding of calmodulin in the presence of Ca(2+). Its function is as follows. Cyclic nucleotide phosphodiesterase with a dual specificity for the second messengers cAMP and cGMP, which are key regulators of many important physiological processes. Has a preference for cGMP as a substrate. This Homo sapiens (Human) protein is Dual specificity calcium/calmodulin-dependent 3',5'-cyclic nucleotide phosphodiesterase 1B.